Here is a 1369-residue protein sequence, read N- to C-terminus: ATP-dependent RNA helicase DHX29 (1369 aa).

Disordered regions lie at residues 27–75 and 176–226; these read SAEA…TNDS and SQEF…KNME. Residues Ser-71, Ser-192, and Ser-200 each carry the phosphoserine modification. Over residues 189–201 the composition is skewed to polar residues; the sequence is KFQSPQIQATISP. Positions 208–226 are enriched in basic and acidic residues; that stretch reads KTYEEDPKSKPKKEEKNME. 3 coiled-coil regions span residues 222–256, 283–310, and 492–519; these read EKNMEVNMKEWILRYAEQQNEEEKNENSKSLEEEE, LEKNKQGQKEAQEKIRKFQREMETLEDH, and IAKLLNKLKQQQQQQQQHSENKRENSED. The disordered stretch occupies residues 502 to 526; that stretch reads QQQQQQQHSENKRENSEDPEESWEN. The 174-residue stretch at 582 to 755 folds into the Helicase ATP-binding domain; the sequence is VETLKRHRVV…FTHCPILRIS (174 aa). 595 to 602 serves as a coordination point for ATP; it reads GETGSGKS. Positions 702-705 match the DEAH box motif; it reads DEVH. Residues 849-1026 form the Helicase C-terminal domain; the sequence is LILELLAYLD…ELCLHIMKCN (178 aa).

This sequence belongs to the DEAD box helicase family. DEAH subfamily. In terms of assembly, part of the 43S pre-initiation complex (PIC) that contains at least Met-tRNA, EIF1, EIF1A (EIF1AX or EIF1AY), EIF2S1, EIF2S2, EIF2S3, EIF3A, EIF3B, EIF3C, EIF3D, EIF3E, EIF3F, EIF3G, EIF3H, EIF3I, EIF3J, EIF3K, EIF3L, EIF3M, DHX29 and the 40S ribosomal subunit.

The protein localises to the cytoplasm. The enzyme catalyses ATP + H2O = ADP + phosphate + H(+). Functionally, ATP-binding RNA helicase involved in translation initiation. Part of the 43S pre-initiation complex that is required for efficient initiation on mRNAs of higher eukaryotes with structured 5'-UTRs by promoting efficient NTPase-dependent 48S complex formation. Specifically binds to the 40S ribosome near the mRNA entrance. Does not possess a processive helicase activity. The polypeptide is ATP-dependent RNA helicase DHX29 (Homo sapiens (Human)).